The sequence spans 114 residues: Large ribosomal subunit protein bL21c (114 aa).

This sequence belongs to the bacterial ribosomal protein bL21 family. In terms of assembly, part of the 50S ribosomal subunit.

Its subcellular location is the plastid. It is found in the chloroplast. This protein binds to 23S rRNA. The sequence is that of Large ribosomal subunit protein bL21c from Staurastrum punctulatum (Green alga).